We begin with the raw amino-acid sequence, 322 residues long: Ribonuclease Z (322 aa).

Zn(2+)-binding residues include H62, H64, D66, H67, H143, D215, and H273. D66 (proton acceptor) is an active-site residue. The segment covering 300–314 (ELRRYELDPREKEPD) has biased composition (basic and acidic residues). Residues 300–322 (ELRRYELDPREKEPDPVGPADES) are disordered.

Belongs to the RNase Z family. As to quaternary structure, homodimer. It depends on Zn(2+) as a cofactor.

It carries out the reaction Endonucleolytic cleavage of RNA, removing extra 3' nucleotides from tRNA precursor, generating 3' termini of tRNAs. A 3'-hydroxy group is left at the tRNA terminus and a 5'-phosphoryl group is left at the trailer molecule.. In terms of biological role, zinc phosphodiesterase, which displays some tRNA 3'-processing endonuclease activity. Probably involved in tRNA maturation, by removing a 3'-trailer from precursor tRNA. This is Ribonuclease Z from Salinibacter ruber (strain DSM 13855 / M31).